We begin with the raw amino-acid sequence, 171 residues long: Photosystem I assembly protein Ycf3 (171 aa).

TPR repeat units follow at residues 33-66 (AFSYYRYGMSAQSSGDYAEALENYYEALKLEEDP), 70-103 (SYILYNIGLIYGNNGDYSKSLDYYHQALDLNSRL), and 118-151 (GTKSSEKKEFEVAQNNFDKAASYWKKAIRLAPNN).

This sequence belongs to the Ycf3 family.

It localises to the plastid. The protein resides in the chloroplast thylakoid membrane. Its function is as follows. Essential for the assembly of the photosystem I (PSI) complex. May act as a chaperone-like factor to guide the assembly of the PSI subunits. The polypeptide is Photosystem I assembly protein Ycf3 (Emiliania huxleyi (Coccolithophore)).